We begin with the raw amino-acid sequence, 129 residues long: Ig lambda-1 chain V regions MOPC 104E/RPC20/J558/S104 (129 aa).

The N-terminal stretch at 1-19 (MAWISLILSLLALSSGAIS) is a signal peptide. At glutamine 20 the chain carries Pyrrolidone carboxylic acid. One can recognise an Ig-like domain in the interval 20–125 (QAVVTQESAL…HWVFGGGTKL (106 aa)).

This is Ig lambda-1 chain V regions MOPC 104E/RPC20/J558/S104 from Mus musculus (Mouse).